We begin with the raw amino-acid sequence, 384 residues long: Sphingosine 1-phosphate receptor 3 (384 aa).

Topologically, residues 1–34 (MMINPLIYLHYNYTGKLDHRPTVGTSPGTRDPKT) are extracellular. N-linked (GlcNAc...) asparagine glycosylation occurs at N12. Residues 35–55 (IAFLVVCSFIILENLTVLLAI) form a helical membrane-spanning segment. The Cytoplasmic portion of the chain corresponds to 56–64 (WKNHRFHNR). Residues 65–85 (MYFFIGNLALCDLLASVAYLV) form a helical membrane-spanning segment. Over 86–105 (NLLLSGEKTLQLSPVLWFVR) the chain is Extracellular. A helical membrane pass occupies residues 106-126 (EGSMFVTLGASIFSLLAIAIE). Topologically, residues 127–144 (RHLTMIKMRPYDASKNYR) are cytoplasmic. The chain crosses the membrane as a helical span at residues 145–165 (VFLLIGTCWLVAVLLGALPIL). Residues 166 to 186 (GWNCLGNLPDCSTILPLYTKK) lie on the Extracellular side of the membrane. Residues 187–207 (YVAFCIIVFIVLLLAMSVLYA) form a helical membrane-spanning segment. Residues 208–235 (RIYILVKSSSQKVSKHRNSEHAMSLLRT) are Cytoplasmic-facing. Residues 236–256 (VIIVVGVFIACWMPIFVLLLL) traverse the membrane as a helical segment. Topologically, residues 257–271 (DVACERPCPILYKAD) are extracellular. Residues 272-292 (WFIAVAVLNSAMNPIIYTLAS) traverse the membrane as a helical segment. Topologically, residues 293–384 (REMRRAFLGL…REGEGGNGGR (92 aa)) are cytoplasmic. Polar residues-rich tracts occupy residues 315–325 (NDSGNKQFQEP) and 336–347 (QTHPNQSQQSSR). The disordered stretch occupies residues 315 to 384 (NDSGNKQFQE…REGEGGNGGR (70 aa)). Residues 349–359 (AELDREQETGH) are compositionally biased toward basic and acidic residues.

Belongs to the G-protein coupled receptor 1 family.

The protein localises to the cell membrane. Functionally, receptor for the lysosphingolipid sphingosine 1-phosphate (S1P). The protein is Sphingosine 1-phosphate receptor 3 (s1pr3) of Takifugu rubripes (Japanese pufferfish).